A 353-amino-acid polypeptide reads, in one-letter code: Anthranilate phosphoribosyltransferase (353 aa).

5-phospho-alpha-D-ribose 1-diphosphate-binding positions include G86, 89-90 (GD), 96-99 (NVST), 114-122 (KHGNRAVSG), and S126. G86 is an anthranilate binding site. A Mg(2+)-binding site is contributed by S98. N117 serves as a coordination point for anthranilate. R172 is a binding site for anthranilate. D231 and E232 together coordinate Mg(2+).

The protein belongs to the anthranilate phosphoribosyltransferase family. In terms of assembly, homodimer. It depends on Mg(2+) as a cofactor.

The catalysed reaction is N-(5-phospho-beta-D-ribosyl)anthranilate + diphosphate = 5-phospho-alpha-D-ribose 1-diphosphate + anthranilate. It functions in the pathway amino-acid biosynthesis; L-tryptophan biosynthesis; L-tryptophan from chorismate: step 2/5. Its function is as follows. Catalyzes the transfer of the phosphoribosyl group of 5-phosphorylribose-1-pyrophosphate (PRPP) to anthranilate to yield N-(5'-phosphoribosyl)-anthranilate (PRA). The sequence is that of Anthranilate phosphoribosyltransferase from Pseudomonas syringae pv. syringae (strain B728a).